Consider the following 488-residue polypeptide: Glutamyl-tRNA(Gln) amidotransferase subunit A (488 aa).

Catalysis depends on charge relay system residues Lys-77 and Ser-152. Residue Ser-176 is the Acyl-ester intermediate of the active site.

The protein belongs to the amidase family. GatA subfamily. In terms of assembly, heterotrimer of A, B and C subunits.

The enzyme catalyses L-glutamyl-tRNA(Gln) + L-glutamine + ATP + H2O = L-glutaminyl-tRNA(Gln) + L-glutamate + ADP + phosphate + H(+). Its function is as follows. Allows the formation of correctly charged Gln-tRNA(Gln) through the transamidation of misacylated Glu-tRNA(Gln) in organisms which lack glutaminyl-tRNA synthetase. The reaction takes place in the presence of glutamine and ATP through an activated gamma-phospho-Glu-tRNA(Gln). This chain is Glutamyl-tRNA(Gln) amidotransferase subunit A, found in Streptococcus suis (strain 05ZYH33).